We begin with the raw amino-acid sequence, 290 residues long: uncharacterized protein (290 aa).

5 consecutive transmembrane segments (helical) span residues phenylalanine 10–isoleucine 27, valine 32–serine 54, isoleucine 69–isoleucine 91, valine 100–phenylalanine 117, and tyrosine 121–tyrosine 143. The stretch at valine 147 to lysine 183 forms a coiled coil.

It localises to the cell membrane. This is an uncharacterized protein from Aquifex aeolicus (strain VF5).